Here is a 481-residue protein sequence, read N- to C-terminus: Glutamyl-tRNA(Gln) amidotransferase subunit A (481 aa).

Catalysis depends on charge relay system residues K76 and S151. S175 serves as the catalytic Acyl-ester intermediate.

It belongs to the amidase family. GatA subfamily. In terms of assembly, heterotrimer of A, B and C subunits.

The enzyme catalyses L-glutamyl-tRNA(Gln) + L-glutamine + ATP + H2O = L-glutaminyl-tRNA(Gln) + L-glutamate + ADP + phosphate + H(+). In terms of biological role, allows the formation of correctly charged Gln-tRNA(Gln) through the transamidation of misacylated Glu-tRNA(Gln) in organisms which lack glutaminyl-tRNA synthetase. The reaction takes place in the presence of glutamine and ATP through an activated gamma-phospho-Glu-tRNA(Gln). This chain is Glutamyl-tRNA(Gln) amidotransferase subunit A, found in Neisseria gonorrhoeae (strain NCCP11945).